Consider the following 302-residue polypeptide: Syntaxin-17 (302 aa).

Ser-2 is modified (N-acetylserine). Residues 2–228 (SEDEEKVKLR…KNLGKAAKYK (227 aa)) are Cytoplasmic-facing. Lys-41 carries the N6-acetyllysine modification. Residues 53–123 (EEHINAGRTV…EELKKQFNDE (71 aa)) adopt a coiled-coil conformation. Phosphotyrosine; by ABL1 is present on Tyr-157. In terms of domain architecture, t-SNARE coiled-coil homology spans 162–224 (IPRDQNAAES…EEGTKNLGKA (63 aa)). Residues 229–249 (LAALPVAGALIGGVVGGPIGL) traverse the membrane as a helical segment. Positions 229-275 (LAALPVAGALIGGVVGGPIGLLAGFKVAGIAAALGGGVLGFTGGKLI) are necessary and sufficient for localization to autophagosome. Residues 250-254 (LAGFK) lie on the Lumenal side of the membrane. A helical transmembrane segment spans residues 255 to 275 (VAGIAAALGGGVLGFTGGKLI). Residues 276 to 302 (QRRKQKMMEKLASSCPDLPSQTDKKCS) are Cytoplasmic-facing. Phosphoserine is present on Ser-289. The short motif at 299-302 (KKCS) is the Endoplasmic reticulum retention signal element.

The protein belongs to the syntaxin family. Forms a SNARE complex composed of VAMP8, SNAP29 and STX17 involved in fusion of autophagosome with lysosome. May interact with VTI1B. Probably interacts with BET1, SCFD1 and SEC22B. Interacts with PTPN2 and ABL1; involved in STX17 phosphorylation. Interacts with COPB1. Interacts with TMED9 and TMED10; the interaction is direct. Interacts with VAMP7. Interacts with RUBCNL/PACER; promoting targeting of RUBCNL/PACER to autophagosome. Interacts with VAMP8, SNAP29, VPS39 and VPS41; these interactions are increased in the absence of TMEM39A. Interacts with IRGM; promoting STX17 recruitment to autophagosomes. Interacts with ATG8 proteins GABARAP and MAP1LC3B. Interacts with RNF115; this interaction enhances STX17 stability which in turn promotes autophagosome maturation. Interacts with RAB39A (GTP-bound); the interaction promotes autophagosome-lysosome membrane fusion driven by STX17-SNAP29-VAMP8. Interacts with RAB39B; the interaction may promote a different fonction in autophagy as compared with RAB39A. Post-translationally, phosphorylated at Tyr-157 probably by ABL1. Dephosphorylation by PTPN2; regulates exit from the endoplasmic reticulum.

It localises to the endoplasmic reticulum membrane. The protein resides in the smooth endoplasmic reticulum membrane. It is found in the endoplasmic reticulum-Golgi intermediate compartment membrane. The protein localises to the cytoplasmic vesicle. Its subcellular location is the autophagosome membrane. It localises to the COPII-coated vesicle membrane. The protein resides in the cytoplasm. It is found in the cytosol. The protein localises to the mitochondrion membrane. Its subcellular location is the autolysosome membrane. SNAREs, soluble N-ethylmaleimide-sensitive factor-attachment protein receptors, are essential proteins for fusion of cellular membranes. SNAREs localized on opposing membranes assemble to form a trans-SNARE complex, an extended, parallel four alpha-helical bundle that drives membrane fusion. STX17 is a SNARE of the autophagosome involved in autophagy through the direct control of autophagosome membrane fusion with the lysosome membrane. May also play a role in the early secretory pathway where it may maintain the architecture of the endoplasmic reticulum-Golgi intermediate compartment/ERGIC and Golgi and/or regulate transport between the endoplasmic reticulum, the ERGIC and the Golgi. The protein is Syntaxin-17 of Bos taurus (Bovine).